We begin with the raw amino-acid sequence, 724 residues long: Putative methyltransferase NSUN7 (724 aa).

The active-site Nucleophile is the Cys-444. Disordered stretches follow at residues 542 to 574, 595 to 629, and 698 to 724; these read KTLK…LAVD, ISTS…TPLV, and TSST…RPWL. The span at 543–554 shows a compositional bias: basic residues; that stretch reads TLKRDKKRKKSK. Residues 562–572 show a composition bias toward basic and acidic residues; it reads HHGDPLRDHLA. The segment covering 595 to 618 has biased composition (polar residues); that stretch reads ISTSTKMSAPAKTVSQAGTSSQVR.

The protein belongs to the class I-like SAM-binding methyltransferase superfamily. RsmB/NOP family. In terms of tissue distribution, expressed in testis.

Its function is as follows. May have S-adenosyl-L-methionine-dependent methyl-transferase activity. This chain is Putative methyltransferase NSUN7 (Nsun7), found in Mus musculus (Mouse).